The sequence spans 44 residues: DNA-directed RNA polymerase subunit Rpo12 (44 aa).

Residues Cys8, Cys22, and Cys25 each coordinate Zn(2+).

The protein belongs to the archaeal Rpo12/eukaryotic RPC10 RNA polymerase subunit family. As to quaternary structure, part of the RNA polymerase complex. Requires Zn(2+) as cofactor.

It is found in the cytoplasm. The enzyme catalyses RNA(n) + a ribonucleoside 5'-triphosphate = RNA(n+1) + diphosphate. Functionally, DNA-dependent RNA polymerase (RNAP) catalyzes the transcription of DNA into RNA using the four ribonucleoside triphosphates as substrates. The chain is DNA-directed RNA polymerase subunit Rpo12 from Natronomonas pharaonis (strain ATCC 35678 / DSM 2160 / CIP 103997 / JCM 8858 / NBRC 14720 / NCIMB 2260 / Gabara) (Halobacterium pharaonis).